The primary structure comprises 249 residues: Tetraspanin-18 (249 aa).

Over 1-13 the chain is Cytoplasmic; the sequence is MEGDCLSCMKYLM. Residues 14–34 traverse the membrane as a helical segment; the sequence is FVFNFFIFLGGACLLGIGIWV. At 35-49 the chain is on the extracellular side; sequence MVDPTGFREIVAANP. A helical membrane pass occupies residues 50 to 70; it reads LLITGAYILLAMGGLLFLLGF. The Cytoplasmic segment spans residues 71 to 83; it reads LGCCGAVRENKCL. Residues 84-104 traverse the membrane as a helical segment; sequence LLFFFLFILIIFLAELSAAIL. At 105–223 the chain is on the extracellular side; the sequence is AFIFRGNLTR…AFETYVYLAG (119 aa). N-linked (GlcNAc...) asparagine glycans are attached at residues Asn-111 and Asn-129. The helical transmembrane segment at 224-244 threads the bilayer; sequence ALAIGVLAIELFAMIFAMCLF. Residues 245–249 are Cytoplasmic-facing; the sequence is RGIIQ.

The protein belongs to the tetraspanin (TM4SF) family. As to quaternary structure, interacts with ORAI1; this interaction regulates ORAI1 exit from the endoplasmic (ER), and/or Golgi, and trafficking to the cell surface.

It is found in the membrane. In terms of biological role, plays a role in the cell surface localization of ORAI1 and may participate in the regulation of Ca(2+) signaling and the VWF release in response to inflammatory stimuli. The protein is Tetraspanin-18 of Bos taurus (Bovine).